Consider the following 708-residue polypeptide: Fatty acid oxidation complex subunit alpha (708 aa).

The interval 1 to 191 is enoyl-CoA hydratase; it reads MDNNNAFQLS…KLGVVDACVP (191 aa). The tract at residues 311–708 is 3-hydroxyacyl-CoA dehydrogenase; it reads APVAAVGVLG…RAGLGEKFYP (398 aa).

The protein in the N-terminal section; belongs to the enoyl-CoA hydratase/isomerase family. It in the central section; belongs to the 3-hydroxyacyl-CoA dehydrogenase family. As to quaternary structure, heterotetramer of two alpha chains (FadJ) and two beta chains (FadI).

Its subcellular location is the cytoplasm. It catalyses the reaction a (3S)-3-hydroxyacyl-CoA = a (2E)-enoyl-CoA + H2O. It carries out the reaction a 4-saturated-(3S)-3-hydroxyacyl-CoA = a (3E)-enoyl-CoA + H2O. The catalysed reaction is a (3S)-3-hydroxyacyl-CoA + NAD(+) = a 3-oxoacyl-CoA + NADH + H(+). The enzyme catalyses (3S)-3-hydroxybutanoyl-CoA = (3R)-3-hydroxybutanoyl-CoA. Its pathway is lipid metabolism; fatty acid beta-oxidation. Catalyzes the formation of a hydroxyacyl-CoA by addition of water on enoyl-CoA. Also exhibits 3-hydroxyacyl-CoA epimerase and 3-hydroxyacyl-CoA dehydrogenase activities. The protein is Fatty acid oxidation complex subunit alpha of Vibrio cholerae serotype O1 (strain ATCC 39315 / El Tor Inaba N16961).